We begin with the raw amino-acid sequence, 405 residues long: Multifunctional CCA protein (405 aa).

G8 and R11 together coordinate ATP. Positions 8 and 11 each coordinate CTP. The Mg(2+) site is built by D21 and D23. Positions 91, 137, and 140 each coordinate ATP. 3 residues coordinate CTP: R91, R137, and R140. Positions 225–326 constitute an HD domain; the sequence is TGVHAMLVLD…LRLLRECDAL (102 aa).

Belongs to the tRNA nucleotidyltransferase/poly(A) polymerase family. Bacterial CCA-adding enzyme type 1 subfamily. Monomer. Can also form homodimers and oligomers. Requires Mg(2+) as cofactor. It depends on Ni(2+) as a cofactor.

It catalyses the reaction a tRNA precursor + 2 CTP + ATP = a tRNA with a 3' CCA end + 3 diphosphate. It carries out the reaction a tRNA with a 3' CCA end + 2 CTP + ATP = a tRNA with a 3' CCACCA end + 3 diphosphate. Functionally, catalyzes the addition and repair of the essential 3'-terminal CCA sequence in tRNAs without using a nucleic acid template. Adds these three nucleotides in the order of C, C, and A to the tRNA nucleotide-73, using CTP and ATP as substrates and producing inorganic pyrophosphate. tRNA 3'-terminal CCA addition is required both for tRNA processing and repair. Also involved in tRNA surveillance by mediating tandem CCA addition to generate a CCACCA at the 3' terminus of unstable tRNAs. While stable tRNAs receive only 3'-terminal CCA, unstable tRNAs are marked with CCACCA and rapidly degraded. The protein is Multifunctional CCA protein of Laribacter hongkongensis (strain HLHK9).